The sequence spans 630 residues: Putative polypeptide N-acetylgalactosaminyltransferase 10 (630 aa).

The Cytoplasmic portion of the chain corresponds to 1 to 6 (MNVDLR). A helical; Signal-anchor for type II membrane protein transmembrane segment spans residues 7 to 26 (LIVRLLLAILLTSLVTTILM). The Lumenal portion of the chain corresponds to 27–630 (GKQIHRRLVK…APYDPQREPH (604 aa)). N-linked (GlcNAc...) asparagine glycosylation is found at Asn-72, Asn-84, Asn-146, and Asn-168. Cystine bridges form between Cys-157/Cys-386, Cys-377/Cys-456, and Cys-496/Cys-513. A catalytic subdomain A region spans residues 166–277 (LPNVTVIIAF…TNWLPPLLEP (112 aa)). Substrate is bound by residues Asp-207 and Arg-238. Asp-261 is a binding site for Mn(2+). Residue Ser-262 participates in substrate binding. His-263 is a Mn(2+) binding site. The interval 333 to 394 (PYRTPVLSGA…PCARVGHIGK (62 aa)) is catalytic subdomain B. Substrate is bound at residue Trp-363. His-391 is a binding site for Mn(2+). Residues 483–618 (FSGVIESVAF…NQLEQQWKVG (136 aa)) form the Ricin B-type lectin domain. N-linked (GlcNAc...) asparagine glycosylation is present at Asn-525. 2 cysteine pairs are disulfide-bonded: Cys-543/Cys-559 and Cys-586/Cys-606.

This sequence belongs to the glycosyltransferase 2 family. GalNAc-T subfamily. Requires Mn(2+) as cofactor. In terms of tissue distribution, during embryonic stages 9-11, weakly expressed in the mesoderm. During embryonic stages 12-13, very weak expression is observed in the somatic mesoderm region. No expression detected from stage 14-15. During embryonic stages 16-17, expressed in the epidermis and the antennomaxillary complex. In third instar larvae, expressed ubiquitously in wing, eye-antennal, leg and haltere imaginal disks.

The protein resides in the golgi apparatus membrane. The catalysed reaction is L-seryl-[protein] + UDP-N-acetyl-alpha-D-galactosamine = a 3-O-[N-acetyl-alpha-D-galactosaminyl]-L-seryl-[protein] + UDP + H(+). The enzyme catalyses L-threonyl-[protein] + UDP-N-acetyl-alpha-D-galactosamine = a 3-O-[N-acetyl-alpha-D-galactosaminyl]-L-threonyl-[protein] + UDP + H(+). It participates in protein modification; protein glycosylation. May catalyze the initial reaction in O-linked oligosaccharide biosynthesis, the transfer of an N-acetyl-D-galactosamine residue to a serine or threonine residue on the protein receptor. The sequence is that of Putative polypeptide N-acetylgalactosaminyltransferase 10 (pgant10) from Drosophila melanogaster (Fruit fly).